The chain runs to 397 residues: Phosphoglycerate kinase (397 aa).

Substrate is bound by residues 19 to 21, Arg-35, 58 to 61, Arg-117, and Arg-150; these read DFN and HLGR. Residues Lys-201, Glu-323, and 349–352 each bind ATP; that span reads GGDS.

Belongs to the phosphoglycerate kinase family. Monomer.

It localises to the cytoplasm. It catalyses the reaction (2R)-3-phosphoglycerate + ATP = (2R)-3-phospho-glyceroyl phosphate + ADP. It participates in carbohydrate degradation; glycolysis; pyruvate from D-glyceraldehyde 3-phosphate: step 2/5. The protein is Phosphoglycerate kinase of Syntrophobacter fumaroxidans (strain DSM 10017 / MPOB).